Reading from the N-terminus, the 249-residue chain is Metallo-beta-lactamase type 2 (249 aa).

An N-terminal signal peptide occupies residues 1-22; that stretch reads MMKKMKWALVLALGLTGLNAFG. The Zn(2+) site is built by H98, H100, D102, H161, and C180. K183 lines the substrate pocket. H222 contacts Zn(2+).

This sequence belongs to the metallo-beta-lactamase superfamily. Class-B beta-lactamase family. Monomer. It depends on Zn(2+) as a cofactor.

The protein resides in the periplasm. It carries out the reaction a beta-lactam + H2O = a substituted beta-amino acid. Confers resistance to the different beta-lactams antibiotics (penicillin, cephalosporin and carbapenem) via the hydrolysis of the beta-lactam ring. In Elizabethkingia meningoseptica (Chryseobacterium meningosepticum), this protein is Metallo-beta-lactamase type 2 (blaB4).